We begin with the raw amino-acid sequence, 370 residues long: Homoserine O-acetyltransferase (370 aa).

The AB hydrolase-1 domain occupies 44 to 350 (NAILVAHAWT…AYGHDAFLLE (307 aa)). Residue Ser150 is the Nucleophile of the active site. Residue Arg217 coordinates substrate. Residues Asp311 and His344 contribute to the active site. A substrate-binding site is contributed by Asp345.

Belongs to the AB hydrolase superfamily. MetX family. Homodimer.

It is found in the cytoplasm. It catalyses the reaction L-homoserine + acetyl-CoA = O-acetyl-L-homoserine + CoA. It functions in the pathway amino-acid biosynthesis; L-methionine biosynthesis via de novo pathway; O-acetyl-L-homoserine from L-homoserine: step 1/1. Transfers an acetyl group from acetyl-CoA to L-homoserine, forming acetyl-L-homoserine. This chain is Homoserine O-acetyltransferase, found in Geotalea uraniireducens (strain Rf4) (Geobacter uraniireducens).